Reading from the N-terminus, the 191-residue chain is Protein RER1 homolog (191 aa).

The next 3 membrane-spanning stretches (helical) occupy residues 35 to 55 (AFRW…IILL), 57 to 77 (GFYI…LLFL), and 135 to 155 (FFDV…LTFL).

Belongs to the RER1 family.

It is found in the membrane. May be involved in protein transport along the secretory pathway. This chain is Protein RER1 homolog (rer-1), found in Caenorhabditis elegans.